Reading from the N-terminus, the 489-residue chain is Glutamyl-tRNA(Gln) amidotransferase subunit A (489 aa).

Residues Lys-78 and Ser-153 each act as charge relay system in the active site. The active-site Acyl-ester intermediate is Ser-177.

Belongs to the amidase family. GatA subfamily. In terms of assembly, heterotrimer of A, B and C subunits.

It carries out the reaction L-glutamyl-tRNA(Gln) + L-glutamine + ATP + H2O = L-glutaminyl-tRNA(Gln) + L-glutamate + ADP + phosphate + H(+). Functionally, allows the formation of correctly charged Gln-tRNA(Gln) through the transamidation of misacylated Glu-tRNA(Gln) in organisms which lack glutaminyl-tRNA synthetase. The reaction takes place in the presence of glutamine and ATP through an activated gamma-phospho-Glu-tRNA(Gln). This is Glutamyl-tRNA(Gln) amidotransferase subunit A from Nitratidesulfovibrio vulgaris (strain DP4) (Desulfovibrio vulgaris).